Reading from the N-terminus, the 54-residue chain is Ovomucoid (54 aa).

One can recognise a Kazal-like domain in the interval 4–54 (VDCSDYPKPVCPLDYMPLCGSDSKTYSNKCNFCNAVVESSGTLTLRHFGKC). Cystine bridges form between C6-C36, C14-C33, and C22-C54.

This is the only ovomucoid third domain known to be not glycosylated.

It localises to the secreted. The sequence is that of Ovomucoid from Struthio camelus (Common ostrich).